The sequence spans 687 residues: Probable intron-encoded endonuclease aI3 (687 aa).

A COX1 exons 1 to 3 encoded region spans residues 1–374 (MKQMSYVTRW…NASMDVAFHD (374 aa)). Transmembrane regions (helical) follow at residues 19-39 (IGMT…GMSV), 69-89 (LLMM…NFFL), 103-123 (LNNI…CSVL), 152-172 (AMFA…NFMV), 188-208 (PLFA…LPVL), 240-260 (LFWF…FGVM), 273-293 (FGEM…FLVW), 315-335 (MVIA…IYGG), 341-361 (VPML…LTGV), and 376-396 (IFIY…NNYT). The segment at 375–687 (RIFIYYVSFF…KKESLMKFLK (313 aa)) is COX1 intron 3 encoded.

In the C-terminal section; belongs to the LAGLIDADG endonuclease family. It in the N-terminal section; belongs to the heme-copper respiratory oxidase family. The mature protein may arise from proteolytic cleavage of an in-frame translation of COX1 exons 1 to 3 plus intron 3, containing the aI3 open reading frame.

It is found in the mitochondrion. The protein resides in the membrane. Its function is as follows. Mitochondrial DNA endonuclease involved in intron homing. The chain is Probable intron-encoded endonuclease aI3 (aI3) from Debaryomyces hansenii (strain ATCC 36239 / CBS 767 / BCRC 21394 / JCM 1990 / NBRC 0083 / IGC 2968) (Yeast).